A 301-amino-acid polypeptide reads, in one-letter code: tRNA dimethylallyltransferase (301 aa).

5–12 (GPTASGKS) serves as a coordination point for ATP. 7–12 (TASGKS) serves as a coordination point for substrate. Positions 30 to 33 (DSMQ) are interaction with substrate tRNA.

Belongs to the IPP transferase family. Monomer. Requires Mg(2+) as cofactor.

It carries out the reaction adenosine(37) in tRNA + dimethylallyl diphosphate = N(6)-dimethylallyladenosine(37) in tRNA + diphosphate. Functionally, catalyzes the transfer of a dimethylallyl group onto the adenine at position 37 in tRNAs that read codons beginning with uridine, leading to the formation of N6-(dimethylallyl)adenosine (i(6)A). The protein is tRNA dimethylallyltransferase of Rhodopseudomonas palustris (strain TIE-1).